Reading from the N-terminus, the 591-residue chain is Cytidine monophosphate-N-acetylneuraminic acid hydroxylase (591 aa).

One can recognise a Rieske domain in the interval 12–110; the sequence is LEAEDVRNLK…AVLSETDGSL (99 aa). Residues Cys-52, His-54, Cys-73, and His-76 each coordinate [2Fe-2S] cluster.

It belongs to the CMP-Neu5Ac hydroxylase family. [2Fe-2S] cluster is required as a cofactor.

It localises to the cytoplasm. The catalysed reaction is CMP-N-acetyl-beta-neuraminate + 2 Fe(II)-[cytochrome b5] + O2 + 2 H(+) = CMP-N-glycoloyl-beta-neuraminate + 2 Fe(III)-[cytochrome b5] + H2O. It functions in the pathway amino-sugar metabolism; N-acetylneuraminate metabolism. Functionally, sialic acids are components of carbohydrate chains of glycoconjugates and are involved in cell-cell recognition and cell-pathogen interactions. Catalyzes the conversion of CMP-N-acetylneuraminic acid (CMP-Neu5Ac) into its hydroxylated derivative CMP-N-glycolylneuraminic acid (CMP-Neu5Gc), a sialic acid abundantly expressed at the surface of many cells. The protein is Cytidine monophosphate-N-acetylneuraminic acid hydroxylase (cmah) of Danio rerio (Zebrafish).